The primary structure comprises 442 residues: Prenyltransferase nscD (442 aa).

Belongs to the tryptophan dimethylallyltransferase family.

It functions in the pathway secondary metabolite biosynthesis. In terms of biological role, prenyltransferase; part of the gene cluster that mediates the biosynthesis of neosartoricin B, a prenylated anthracenone that probably exhibits T-cell antiproliferative activity, suggestive of a physiological role as an immunosuppressive agent. The non-reducing polyketide synthase nscA probably synthesizes and cyclizes the decaketide backbone. The hydrolase nscB then mediates the product release through hydrolysis followed by spontaneous decarboxylation. The prenyltransferase nscD catalyzes the addition of the dimethylallyl group to the aromatic C5. The FAD-dependent monooxygenase nscC is then responsible for the stereospecific hydroxylation at C2. Neosartoricin B can be converted into two additional compounds neosartoricins C and D. Neosartoricin C is a spirocyclic compound that is cyclized through the attack of C3 hydroxyl on C14, followed by dehydration. On the other hand, neosartoricin D is a further cyclized compound in which attack of C2 on C14 in neosartoricin C results in the formation of the acetal-containing dioxabicyclo-octanone ring. Both of these compounds are novel and possibly represent related metabolites of the gene cluster. The polypeptide is Prenyltransferase nscD (Trichophyton verrucosum (strain HKI 0517)).